The chain runs to 318 residues: tRNA uridine(34) hydroxylase (318 aa).

In terms of domain architecture, Rhodanese spans 125–219 (QDPNTVVIDA…YGTSKDTEGK (95 aa)). Catalysis depends on Cys179, which acts as the Cysteine persulfide intermediate.

Belongs to the TrhO family.

It carries out the reaction uridine(34) in tRNA + AH2 + O2 = 5-hydroxyuridine(34) in tRNA + A + H2O. In terms of biological role, catalyzes oxygen-dependent 5-hydroxyuridine (ho5U) modification at position 34 in tRNAs. In Acholeplasma laidlawii (strain PG-8A), this protein is tRNA uridine(34) hydroxylase.